A 198-amino-acid polypeptide reads, in one-letter code: Outer-membrane lipoprotein carrier protein (198 aa).

The N-terminal stretch at 1 to 17 is a signal peptide; it reads MKKILLSLCFLSSVAFA.

The protein belongs to the LolA family. As to quaternary structure, monomer.

The protein resides in the periplasm. In terms of biological role, participates in the translocation of lipoproteins from the inner membrane to the outer membrane. Only forms a complex with a lipoprotein if the residue after the N-terminal Cys is not an aspartate (The Asp acts as a targeting signal to indicate that the lipoprotein should stay in the inner membrane). The sequence is that of Outer-membrane lipoprotein carrier protein from Aliivibrio salmonicida (strain LFI1238) (Vibrio salmonicida (strain LFI1238)).